Here is a 377-residue protein sequence, read N- to C-terminus: MAKQDYYEILGVSKTAEEREIKKAYKRLAMKYHPDRNQGDKEAEAKFKEIKEAYEILTDAQKRAAYDQYGHAAFEQGGMGGGGGFGGGADFSDIFGDVFGDIFGGGRGRQRAARGADLRYNMELTLEEAVRGVTKEIRIPTLEECDVCHGSGAKAGSKPQTCPTCHGAGQVQMRQGFFAVQQTCPHCQGRGTLIKDPCNKCHGHGRVEKTKTLSVKIPAGVDTGDRIRLAGEGEAGEHGAPAGDLYVQVQVKQHAIFEREGNNLYCEVPINFTMAALGGEIEVPTLDGRVSLKVPGETQTGKLFRMRGKGVKSVRGGAQGDLLCRVVVETPVGLNEKQKQLLKELQESFGGPTGENNSPRSKSFFDGVKKFFDDLTR.

Residues 5–70 form the J domain; it reads DYYEILGVSK…QKRAAYDQYG (66 aa). The CR-type zinc finger occupies 132–210; that stretch reads GVTKEIRIPT…CHGHGRVEKT (79 aa). 8 residues coordinate Zn(2+): cysteine 145, cysteine 148, cysteine 162, cysteine 165, cysteine 184, cysteine 187, cysteine 198, and cysteine 201. CXXCXGXG motif repeat units lie at residues 145–152, 162–169, 184–191, and 198–205; these read CDVCHGSG, CPTCHGAG, CPHCQGRG, and CNKCHGHG.

It belongs to the DnaJ family. As to quaternary structure, homodimer. It depends on Zn(2+) as a cofactor.

The protein resides in the cytoplasm. Its function is as follows. Participates actively in the response to hyperosmotic and heat shock by preventing the aggregation of stress-denatured proteins and by disaggregating proteins, also in an autonomous, DnaK-independent fashion. Unfolded proteins bind initially to DnaJ; upon interaction with the DnaJ-bound protein, DnaK hydrolyzes its bound ATP, resulting in the formation of a stable complex. GrpE releases ADP from DnaK; ATP binding to DnaK triggers the release of the substrate protein, thus completing the reaction cycle. Several rounds of ATP-dependent interactions between DnaJ, DnaK and GrpE are required for fully efficient folding. Also involved, together with DnaK and GrpE, in the DNA replication of plasmids through activation of initiation proteins. The polypeptide is Chaperone protein DnaJ (Klebsiella pneumoniae (strain 342)).